The primary structure comprises 520 residues: Nucleolar protein 12 (520 aa).

Disordered stretches follow at residues 1 to 29 (MGKK…NVSV) and 41 to 185 (AGPV…DDDE). Acidic residues predominate over residues 78 to 95 (ASEDQFMEDAPESPDAAE). Positions 120 to 132 (SYMRRLAKEEQKE) are enriched in basic and acidic residues. Over residues 144 to 168 (LEEESEDGEKESPQSEDGESEDEGA) the composition is skewed to acidic residues. RRM domains are found at residues 191 to 303 (RTVF…NVAH) and 311 to 421 (RCVF…RAKK). The interval 472 to 520 (EGNRATADGSSRIRVRTKSRGSKAKKDSRSKKRAAAYKAAGGKKAKIGK) is disordered. The segment covering 484-520 (IRVRTKSRGSKAKKDSRSKKRAAAYKAAGGKKAKIGK) has biased composition (basic residues).

This sequence belongs to the RRM RBM34 family.

It is found in the nucleus. It localises to the nucleolus. Functionally, involved in pre-25S rRNA processing. In Emericella nidulans (strain FGSC A4 / ATCC 38163 / CBS 112.46 / NRRL 194 / M139) (Aspergillus nidulans), this protein is Nucleolar protein 12 (nop12).